The sequence spans 990 residues: Putative ariadne-like RING finger protein R811 (990 aa).

The VWFA domain maps to 8 to 201; that stretch reads DLAIVVDATG…IITQTTIKLL (194 aa). The TRIAD supradomain stretch occupies residues 797–990; sequence EKGLCMICFN…GGAFEYDQDD (194 aa). Cysteine 801, cysteine 804, cysteine 827, and cysteine 830 together coordinate Zn(2+). An RING-type 1 zinc finger spans residues 801–854; that stretch reads CMICFNEFSKSNLRQICGRKVCQSVACYDCMKSWYGENKVGDLIHVNALTCPFC. The IBR-type zinc finger occupies 855–903; sequence KQCPMFNILAAFNRQVCAMVRTNNSFDIDWWYGWCLKCFQPKKVVEKEC. Zn(2+) is bound by residues cysteine 930 and cysteine 935. The RING-type 2; atypical zinc-finger motif lies at 930–961; sequence CPNSLCKIPIIKDGGCNHMECTACKKHFCWLC. Cysteine 945 is a catalytic residue. Cysteine 950 and cysteine 953 together coordinate Zn(2+).

The chain is Putative ariadne-like RING finger protein R811 from Acanthamoeba polyphaga (Amoeba).